Consider the following 130-residue polypeptide: Histidine triad nucleotide-binding protein 1 (130 aa).

Positions 22–130 (LFGKIIRKEI…GGRQLQWPPG (109 aa)) constitute an HIT domain. Residues 114–118 (HLHLH) carry the Histidine triad motif motif.

In Caenorhabditis elegans, this protein is Histidine triad nucleotide-binding protein 1 (hint-1).